The following is a 157-amino-acid chain: uncharacterized protein (157 aa).

4 consecutive transmembrane segments (helical) span residues 29–49 (LLII…PAYF), 52–72 (VLHV…GFGI), 93–113 (LGSV…RTWL), and 117–137 (NEMF…TITA).

It is found in the cell membrane. This is an uncharacterized protein from Bacillus subtilis (strain 168).